The following is a 310-amino-acid chain: Beta-lactamase AST-1 (310 aa).

The first 31 residues, 1-31 (MTFSALPFRRADRRRLLAAALAACALTLTAA), serve as a signal peptide directing secretion. C32 carries the N-palmitoyl cysteine lipid modification. A lipid anchor (S-diacylglycerol cysteine) is attached at C32. Catalysis depends on S91, which acts as the Acyl-ester intermediate. S151 contacts substrate. E187 acts as the Proton acceptor in catalysis. Residue 255 to 257 (KTG) coordinates substrate.

This sequence belongs to the class-A beta-lactamase family.

Its subcellular location is the cell membrane. The catalysed reaction is a beta-lactam + H2O = a substituted beta-amino acid. Inhibited by clavulanic acid. Its function is as follows. Confers high levels of resistance to amoxicillin, benzylpenicillin, piperacillin, ticarcillin and cephalothin. Not active against ceftazidime, cefotaxime and aztreonam. The chain is Beta-lactamase AST-1 (bla) from Nocardia asteroides.